The chain runs to 147 residues: UPF0306 protein YhbP (147 aa).

This sequence belongs to the UPF0306 family.

The polypeptide is UPF0306 protein YhbP (Shigella boydii serotype 4 (strain Sb227)).